Consider the following 405-residue polypeptide: Putative arsenical pump-driving ATPase (405 aa).

8-15 (GKGGVGKT) contributes to the ATP binding site.

It belongs to the arsA ATPase family.

It catalyses the reaction arsenite(in) + ATP + H2O = arsenite(out) + ADP + phosphate + H(+). Its function is as follows. Anion-transporting ATPase. Catalyzes the extrusion of arsenite. The chain is Putative arsenical pump-driving ATPase from Prosthecochloris vibrioformis (Chlorobium vibrioforme).